The following is a 306-amino-acid chain: Leucine-rich repeat-containing protein 75B (306 aa).

Positions M1–A22 are disordered. Positions D12 to A22 are enriched in low complexity. LRR repeat units follow at residues L173–E186 and L198–L211.

Belongs to the LRRC75 family.

Functionally, may suppress myogenic differentiation by modulating MYOG expression and Erk1/2 signaling. This Mus musculus (Mouse) protein is Leucine-rich repeat-containing protein 75B.